The chain runs to 592 residues: Bifunctional enzyme BirA/CoaX (592 aa).

The biotin--protein ligase stretch occupies residues 1–329 (MTVLKPSHWR…ISLRPDNRSV (329 aa)). Positions 83-259 (QTALKHECAS…ELGAVLEQYA (177 aa)) constitute a BPL/LPL catalytic domain. The segment at 336–592 (DSERFLLLEG…AAEGGESEHA (257 aa)) is type III pantothenate kinase. An ATP-binding site is contributed by 344 to 351 (EGGNSRLK). Substrate-binding positions include Tyr-426 and 433–436 (GSDR). Asp-435 functions as the Proton acceptor in the catalytic mechanism. Thr-458 is an ATP binding site. A substrate-binding site is contributed by Thr-508.

It in the N-terminal section; belongs to the biotin--protein ligase family. The protein in the C-terminal section; belongs to the type III pantothenate kinase family. Requires NH4(+) as cofactor. K(+) serves as cofactor.

It localises to the cytoplasm. It carries out the reaction biotin + L-lysyl-[protein] + ATP = N(6)-biotinyl-L-lysyl-[protein] + AMP + diphosphate + H(+). The enzyme catalyses (R)-pantothenate + ATP = (R)-4'-phosphopantothenate + ADP + H(+). It participates in cofactor biosynthesis; coenzyme A biosynthesis; CoA from (R)-pantothenate: step 1/5. Its function is as follows. Activates biotin to form biotinyl-5'-adenylate and transfers the biotin moiety to biotin-accepting proteins. Catalyzes the phosphorylation of pantothenate (Pan), the first step in CoA biosynthesis. This chain is Bifunctional enzyme BirA/CoaX (birA/coaX), found in Neisseria gonorrhoeae (strain ATCC 700825 / FA 1090).